The sequence spans 508 residues: Photosystem II CP47 reaction center protein (508 aa).

6 helical membrane passes run 21–36 (SVHI…WAGS), 101–115 (IVFS…IWHW), 140–156 (GIHL…FGAF), 203–218 (IAAG…FHLS), 237–252 (VLSS…AFVV), and 457–472 (SFAL…HGAR).

This sequence belongs to the PsbB/PsbC family. PsbB subfamily. In terms of assembly, PSII is composed of 1 copy each of membrane proteins PsbA, PsbB, PsbC, PsbD, PsbE, PsbF, PsbH, PsbI, PsbJ, PsbK, PsbL, PsbM, PsbT, PsbX, PsbY, PsbZ, Psb30/Ycf12, at least 3 peripheral proteins of the oxygen-evolving complex and a large number of cofactors. It forms dimeric complexes. Binds multiple chlorophylls. PSII binds additional chlorophylls, carotenoids and specific lipids. serves as cofactor.

It is found in the plastid. Its subcellular location is the chloroplast thylakoid membrane. Functionally, one of the components of the core complex of photosystem II (PSII). It binds chlorophyll and helps catalyze the primary light-induced photochemical processes of PSII. PSII is a light-driven water:plastoquinone oxidoreductase, using light energy to abstract electrons from H(2)O, generating O(2) and a proton gradient subsequently used for ATP formation. The polypeptide is Photosystem II CP47 reaction center protein (Arabis hirsuta (Hairy rock-cress)).